The sequence spans 96 residues: Envelope glycoprotein N (96 aa).

A signal peptide spans 1–21 (MPRSPLIVAVVAAALFAIVRG). Residues 22 to 54 (RDPLLDAMRREGAMDFWSAGCYARGVPLSEPPQ) lie on the Virion surface side of the membrane. The chain crosses the membrane as a helical span at residues 55 to 75 (ALVVFYVALTAVMVAVALYAY). Over 76 to 96 (GLCFRLMGASGPNKKESRGRG) the chain is Intravirion.

It belongs to the herpesviridae glycoprotein N family. Interacts (via N-terminus) with gM (via N-terminus). The gM-gN heterodimer forms the gCII complex.

The protein localises to the virion membrane. Its subcellular location is the host membrane. The protein resides in the host Golgi apparatus. It is found in the host trans-Golgi network. Envelope glycoprotein necessary for proper maturation of gM and modulation of its membrane fusion activity. Also plays a critical role in virion morphogenesis. The protein is Envelope glycoprotein N of Bos taurus (Bovine).